Consider the following 172-residue polypeptide: Nicotinamide-nucleotide adenylyltransferase (172 aa).

Belongs to the archaeal NMN adenylyltransferase family.

It localises to the cytoplasm. The catalysed reaction is beta-nicotinamide D-ribonucleotide + ATP + H(+) = diphosphate + NAD(+). It functions in the pathway cofactor biosynthesis; NAD(+) biosynthesis; NAD(+) from nicotinamide D-ribonucleotide: step 1/1. The chain is Nicotinamide-nucleotide adenylyltransferase from Methanococcus aeolicus (strain ATCC BAA-1280 / DSM 17508 / OCM 812 / Nankai-3).